We begin with the raw amino-acid sequence, 239 residues long: Orotidine 5'-phosphate decarboxylase (239 aa).

Residues Asp-10, Lys-32, 59–68 (DLKLHDIPNT), Thr-122, Arg-184, Gln-193, Gly-213, and Arg-214 contribute to the substrate site. Lys-61 acts as the Proton donor in catalysis.

This sequence belongs to the OMP decarboxylase family. Type 1 subfamily. Homodimer.

It carries out the reaction orotidine 5'-phosphate + H(+) = UMP + CO2. The protein operates within pyrimidine metabolism; UMP biosynthesis via de novo pathway; UMP from orotate: step 2/2. Catalyzes the decarboxylation of orotidine 5'-monophosphate (OMP) to uridine 5'-monophosphate (UMP). The protein is Orotidine 5'-phosphate decarboxylase of Shouchella clausii (strain KSM-K16) (Alkalihalobacillus clausii).